The following is a 343-amino-acid chain: 2-alkenal reductase (NADP(+)-dependent) (343 aa).

2 residues coordinate substrate: tyrosine 55 and tyrosine 80. NADP(+)-binding positions include 165–166 (AV), glycine 186, lysine 190, tyrosine 206, asparagine 230, cysteine 252, tyrosine 258, 282–284 (FLV), and asparagine 332.

The protein belongs to the NADP-dependent oxidoreductase L4BD family. As to quaternary structure, homodimer.

It carries out the reaction an n-alkanal + NADP(+) = an alk-2-enal + NADPH + H(+). Functionally, reduces the C=C double bonds of alpha, beta unsaturated enones, but has no activity on enones with an endocyclic C=C double-bond. Shows a high specificity for NADPH as the hybrid donor. Substrates are 1-nitrocyclohexene, 2-methylpentenal, trans-cinnamaldehyde, methyl-trans-2-methylcinnamaldehyde, trans-2-nonenal and 1-octen-3-one. Reduced activity with aplha-methyl transcinnamaldehyde, 1-cyclohexene-1-carboxaldehyde, methyl crotonate, (R)-pulegone, and dimethyl itaconate and no activity with maleimides, citral, (5R)- or (5S)-carvone, (S)-perillyl alcohol, and substituted cyclohexenones and cyclopentenones. May also act as a allyl-alcohol dehydrogenase by catalyzing the dehydrogenation of secondary allylic alcohols rather than saturated secondary alcohols. Allyl-alcohol dehydrogenase is specific for the S-stereoisomer of the alcohols. This is 2-alkenal reductase (NADP(+)-dependent) (DBR) from Nicotiana tabacum (Common tobacco).